We begin with the raw amino-acid sequence, 284 residues long: Probable palmitoyltransferase ZDHHC24 (284 aa).

Residues 1-18 (MGESWAARGAEGAPARMP) are Cytoplasmic-facing. The helical transmembrane segment at 19–39 (LVLTALWAAVVVLELAYVMVL) threads the bilayer. The Extracellular segment spans residues 40–52 (GPGPPPLGPLARA). A helical membrane pass occupies residues 53–73 (LQLALAAYQLLNLLGNVVLFL). Over 74–137 (RSDPSIRGVM…GCCVGFHNYR (64 aa)) the chain is Cytoplasmic. The region spanning 94–144 (AYCYQCQSQVPPRSGHCSACRVCILRRDHHCRLLGCCVGFHNYRPFLCLLL) is the DHHC domain. The active-site S-palmitoyl cysteine intermediate is Cys124. A helical membrane pass occupies residues 138–158 (PFLCLLLHSAGVLLHISVLLG). Over 159–166 (PALSALLQ) the chain is Extracellular. A helical transmembrane segment spans residues 167–187 (AHSALYTVALLLLPWLMLLTG). Topologically, residues 188–195 (KVSLAQFA) are cytoplasmic. Residues 196-216 (LAFVVDTCVAGALLCGAGLLF) traverse the membrane as a helical segment. Residues 217–284 (HGMLLLRGQT…TPGDVGLVTS (68 aa)) are Extracellular-facing.

The protein belongs to the DHHC palmitoyltransferase family.

Its subcellular location is the membrane. It carries out the reaction L-cysteinyl-[protein] + hexadecanoyl-CoA = S-hexadecanoyl-L-cysteinyl-[protein] + CoA. Functionally, probable palmitoyltransferase that could catalyze the addition of palmitate onto various protein substrates. The protein is Probable palmitoyltransferase ZDHHC24 of Mus musculus (Mouse).